The following is a 510-amino-acid chain: Probable DNA ligase (510 aa).

E210 contributes to the ATP binding site. The active-site N6-AMP-lysine intermediate is K212. R217, R232, E261, F296, R367, and K373 together coordinate ATP.

Belongs to the ATP-dependent DNA ligase family. Requires Mg(2+) as cofactor.

The enzyme catalyses ATP + (deoxyribonucleotide)n-3'-hydroxyl + 5'-phospho-(deoxyribonucleotide)m = (deoxyribonucleotide)n+m + AMP + diphosphate.. DNA ligase that seals nicks in double-stranded DNA during DNA replication, DNA recombination and DNA repair. The sequence is that of Probable DNA ligase from Saccharopolyspora erythraea (strain ATCC 11635 / DSM 40517 / JCM 4748 / NBRC 13426 / NCIMB 8594 / NRRL 2338).